The sequence spans 131 residues: UPF0102 protein H16_A3579 (131 aa).

Belongs to the UPF0102 family.

This chain is UPF0102 protein H16_A3579, found in Cupriavidus necator (strain ATCC 17699 / DSM 428 / KCTC 22496 / NCIMB 10442 / H16 / Stanier 337) (Ralstonia eutropha).